Reading from the N-terminus, the 211-residue chain is 3-demethoxyubiquinol 3-hydroxylase (211 aa).

Positions 60, 90, 93, 142, 174, and 177 each coordinate Fe cation.

The protein belongs to the COQ7 family. Fe cation is required as a cofactor.

The protein localises to the cell membrane. The catalysed reaction is a 5-methoxy-2-methyl-3-(all-trans-polyprenyl)benzene-1,4-diol + AH2 + O2 = a 3-demethylubiquinol + A + H2O. The protein operates within cofactor biosynthesis; ubiquinone biosynthesis. Its function is as follows. Catalyzes the hydroxylation of 2-nonaprenyl-3-methyl-6-methoxy-1,4-benzoquinol during ubiquinone biosynthesis. This chain is 3-demethoxyubiquinol 3-hydroxylase, found in Francisella tularensis subsp. novicida (strain U112).